Consider the following 256-residue polypeptide: Gamma carbonic anhydrase-like 2, mitochondrial (256 aa).

Residues 1–33 (MATSLARISKRSITSAVSSNLIRRYFAAEAVAV) constitute a mitochondrion transit peptide. Residues 103–105 (RGD) and 118–119 (QE) each bind substrate. His-124 contributes to the Zn(2+) binding site. Residues Arg-152, Gln-164, and Tyr-231 each contribute to the substrate site.

This sequence belongs to the gamma-class carbonic anhydrase family. In terms of assembly, component of the mitochondrial oxidoreductase respiratory chain complex I; element of the extra matrix-exposed domain, which is attached to the membrane arm of this complex. Interacts with GAMMACA2.

It is found in the mitochondrion membrane. Involved in complex I assembly in mitochondria and respiration. This is Gamma carbonic anhydrase-like 2, mitochondrial (GAMMACAL2) from Arabidopsis thaliana (Mouse-ear cress).